The sequence spans 879 residues: Phosphoenolpyruvate carboxylase (879 aa).

Active-site residues include H138 and K546.

This sequence belongs to the PEPCase type 1 family. Mg(2+) serves as cofactor.

It carries out the reaction oxaloacetate + phosphate = phosphoenolpyruvate + hydrogencarbonate. Functionally, forms oxaloacetate, a four-carbon dicarboxylic acid source for the tricarboxylic acid cycle. This Pectobacterium carotovorum subsp. carotovorum (strain PC1) protein is Phosphoenolpyruvate carboxylase.